A 559-amino-acid polypeptide reads, in one-letter code: YTH domain-containing family protein 1 (559 aa).

The tract at residues 1–49 is disordered; that stretch reads MSATSVDPQRTKGQDNKVQNGSLHQKDAVHDNDFEPYLSGQSNPSNSYP. Serine 2 is subject to N-acetylserine. The segment covering 24 to 33 has biased composition (basic and acidic residues); the sequence is HQKDAVHDND. The residue at position 182 (serine 182) is a Phosphoserine. Positions 239–365 are disordered; sequence SKPAKPQPKM…PTSAPSVESH (127 aa). Composition is skewed to low complexity over residues 279–305 and 314–326; these read PAPK…AQPL and QPQY…PLQP. Polar residues predominate over residues 343 to 361; sequence GANSDSNSVGNAQPTSAPS. Positions 389–523 constitute a YTH domain; the sequence is GRVFIIKSYS…EKAKQVLKII (135 aa). RNA-binding positions include 395–397, aspartate 401, 411–412, asparagine 441, tryptophan 465, and tryptophan 470; these read KSY and WC.

It belongs to the YTHDF family. YTHDF1 subfamily. Interacts with CNOT1; promoting recruitment of the CCR4-NOT complex. Interacts with ribosomes. Interacts with eIF3 (EIF3A or EIF3B). Interacts with YTHDF3. Ubiquitinated by the CUL7-FBXW8 E3 ligase complex leading to degradation. Deubiquitinated and stabilized by USP5 by removing 'Lys-11'-linked polyubiquitination. In brain, preferentially expressed in the hippocampus.

The protein resides in the cytoplasm. Its subcellular location is the P-body. It is found in the stress granule. In terms of biological role, specifically recognizes and binds N6-methyladenosine (m6A)-containing mRNAs, and regulates their stability. M6A is a modification present at internal sites of mRNAs and some non-coding RNAs and plays a role in mRNA stability and processing. Acts as a regulator of mRNA stability by promoting degradation of m6A-containing mRNAs via interaction with the CCR4-NOT complex. The YTHDF paralogs (YTHDF1, YTHDF2 and YTHDF3) share m6A-containing mRNAs targets and act redundantly to mediate mRNA degradation and cellular differentiation. Required to facilitate learning and memory formation in the hippocampus by binding to m6A-containing neuronal mRNAs. Acts as a regulator of axon guidance by binding to m6A-containing ROBO3 transcripts. Acts as a negative regulator of antigen cross-presentation in myeloid dendritic cells. In the context of tumorigenesis, negative regulation of antigen cross-presentation limits the anti-tumor response by reducing efficiency of tumor-antigen cross-presentation. Promotes formation of phase-separated membraneless compartments, such as P-bodies or stress granules, by undergoing liquid-liquid phase separation upon binding to mRNAs containing multiple m6A-modified residues: polymethylated mRNAs act as a multivalent scaffold for the binding of YTHDF proteins, juxtaposing their disordered regions and thereby leading to phase separation. The resulting mRNA-YTHDF complexes then partition into different endogenous phase-separated membraneless compartments, such as P-bodies, stress granules or neuronal RNA granules. The chain is YTH domain-containing family protein 1 from Mus musculus (Mouse).